The following is a 538-amino-acid chain: Translation initiation factor IF-3, chloroplastic (538 aa).

A chloroplast-targeting transit peptide spans 1–140; sequence MVRSSCLQCD…VTQRKEIAVF (140 aa). The tract at residues 141-290 is head; sequence SASGQAAEPE…EEVEEEQEVL (150 aa). 2 disordered regions span residues 146–165 and 188–210; these read AAEP…PAAK and RTDS…NWPS. The segment at 291–474 is IF-3 like; it reads SWADRRRALA…LILNLAPAGE (184 aa). The disordered stretch occupies residues 484-538; sequence AERDRKAAAEEEGEGDDLDFVDENEDEDVEGEGEEEEAEELEEETAEGTEVPTRS. Residues 493–530 show a composition bias toward acidic residues; that stretch reads EEEGEGDDLDFVDENEDEDVEGEGEEEEAEELEEETAE.

It belongs to the IF-3 family. Monomer. Post-translationally, the N-terminus is blocked.

It localises to the plastid. Its subcellular location is the chloroplast. Functionally, involved in chloroplast protein synthesis. It enhances the poly(A,U,G)-dependent binding of the initiator tRNA to chloroplast 30S subunits. This chain is Translation initiation factor IF-3, chloroplastic, found in Euglena gracilis.